The following is a 177-amino-acid chain: Large ribosomal subunit protein uL22 (177 aa).

Residues 118–177 form a disordered region; that stretch reads VESRPSREGRRGGAGESAGGARARRAQGSKAAAAKKAPASSSTKAATTTEASEEAKGGSQ. Over residues 121–130 the composition is skewed to basic and acidic residues; sequence RPSREGRRGG. The segment covering 145–167 has biased composition (low complexity); that stretch reads GSKAAAAKKAPASSSTKAATTTE.

This sequence belongs to the universal ribosomal protein uL22 family. Part of the 50S ribosomal subunit.

Functionally, this protein binds specifically to 23S rRNA; its binding is stimulated by other ribosomal proteins, e.g. L4, L17, and L20. It is important during the early stages of 50S assembly. It makes multiple contacts with different domains of the 23S rRNA in the assembled 50S subunit and ribosome. Its function is as follows. The globular domain of the protein is located near the polypeptide exit tunnel on the outside of the subunit, while an extended beta-hairpin is found that lines the wall of the exit tunnel in the center of the 70S ribosome. The polypeptide is Large ribosomal subunit protein uL22 (Mycobacterium sp. (strain JLS)).